We begin with the raw amino-acid sequence, 672 residues long: Transcriptional regulator Kaiso (672 aa).

An interaction with NCOR1 region spans residues 1–103 (MESRKLISAT…RSDLLDELIK (103 aa)). A self-association region spans residues 1 to 136 (MESRKLISAT…SGTAQDGNTE (136 aa)). In terms of domain architecture, BTB spans 32 to 94 (CDVTVIVEDR…IYSSKIVRVR (63 aa)). Residues Lys-151 and Lys-153 each participate in a glycyl lysine isopeptide (Lys-Gly) (interchain with G-Cter in SUMO2) cross-link. Phosphothreonine is present on Thr-251. The interaction with CBFA2T3 stretch occupies residues 298 to 573 (LPNHMPSSIN…FMSSHIKSVH (276 aa)). Residues 325 to 354 (KANEEEEEEIIDDDDDTISSSPDSAVSNTS) are disordered. Residues 328–341 (EEEEEEIIDDDDDT) are compositionally biased toward acidic residues. Glycyl lysine isopeptide (Lys-Gly) (interchain with G-Cter in SUMO2) cross-links involve residues Lys-390, Lys-407, Lys-414, Lys-449, Lys-465, Lys-474, and Lys-479. The segment at 454-672 (EGEARLENEI…EFEFIIPESY (219 aa)) is interaction with CTNND1. Positions 471 to 480 (MANKRMKVKH) match the Nuclear localization signal motif. 3 C2H2-type zinc fingers span residues 494-516 (YICI…FNIH), 522-544 (YPCR…EIHH), and 550-573 (YQCL…KSVH). Residues 514–638 (NIHSWEKKYP…TTTSTQNKPM (125 aa)) form a required for DNA-binding region. Glycyl lysine isopeptide (Lys-Gly) (interchain with G-Cter in SUMO2) cross-links involve residues Lys-539, Lys-570, Lys-582, Lys-611, and Lys-618. The tract at residues 616–635 (GYKVDTGKEPPVGTTTSTQN) is disordered.

Self-associates. Interacts with CTNND2. Interacts with CTNND1, and this interaction inhibits binding to both methylated and non-methylated DNA. Interacts with NCOR1. Interacts with KPNA2/RCH1, which may mediate nuclear import of this protein. Interacts with CBFA2T3. As to expression, expressed in vascular endothelium.

The protein localises to the nucleus. It is found in the cytoplasm. In terms of biological role, transcriptional regulator with bimodal DNA-binding specificity. Binds to methylated CpG dinucleotides in the consensus sequence 5'-CGCG-3' and also binds to the non-methylated consensus sequence 5'-CTGCNA-3' also known as the consensus kaiso binding site (KBS). Recruits the N-CoR repressor complex to promote histone deacetylation and the formation of repressive chromatin structures in target gene promoters. May contribute to the repression of target genes of the Wnt signaling pathway. May also activate transcription of a subset of target genes by the recruitment of CTNND2. Represses expression of MMP7 in conjunction with transcriptional corepressors CBFA2T3, CBFA2T2 and RUNX1T1. The sequence is that of Transcriptional regulator Kaiso (ZBTB33) from Homo sapiens (Human).